The primary structure comprises 361 residues: uncharacterized protein (361 aa).

WD repeat units lie at residues 57-96 (RHKK…VSSK), 103-142 (KEIS…GIIH), 146-184 (DHID…KPIL), 187-229 (EQDE…DHTD), 237-275 (SHDF…YERI), and 280-318 (SSRS…GDES). Residues 311–361 (DQKEGDESSSSDNLDSDEDSSSDSEFSSPKKKKKVGNQGKKPLGTDFFDGL) form a disordered region.

The protein resides in the nucleus. Its subcellular location is the nucleolus. This is an uncharacterized protein from Schizosaccharomyces pombe (strain 972 / ATCC 24843) (Fission yeast).